Reading from the N-terminus, the 332-residue chain is MEVAEPSCPTEEEEEEEEEEEQSAEPRPRTRSNPEGAEDRALGAQTSVGSRSEGEGEAASADDGTANPPGAGPKPWQVPPPAPEVQVRTPRVNCPEKVIICLDLSEEMALPKLESFNGSKTNALNVSQKMIEMFVRTKHKIDKSHEFALVVVNDDTAWLSGLTSDPRELCSCLYDLETASCSTFNLEGLFSLIQQKTELPVTENVQTIPPPYVVRTILVYSRPPCQPQFSLTEPMKKMFQCPYFFFDVVYIHNGADEKEEEMSWKDMFAFMGSLDTKGTSYKYEVALAGPALELHNCMAKLLAHPLQRPCQSHASYSLLEEDDEATEVEATV.

Position 1 is an N-acetylmethionine (M1). Residues 1 to 88 (MEVAEPSCPT…PPPAPEVQVR (88 aa)) form a disordered region. Over residues 10-23 (TEEEEEEEEEEEQS) the composition is skewed to acidic residues. S32, S52, and S60 each carry phosphoserine. Residues 70-83 (GAGPKPWQVPPPAP) show a composition bias toward pro residues. The VWFA-like stretch occupies residues 98–301 (VIICLDLSEE…LELHNCMAKL (204 aa)).

It belongs to the BABAM1 family. Component of the ARISC complex, at least composed of UIMC1/RAP80, ABRAXAS1, BRCC3/BRCC36, BABAM2 and BABAM1/NBA1. Component of the BRCA1-A complex, at least composed of BRCA1, BARD1, UIMC1/RAP80, ABRAXAS1, BRCC3/BRCC36, BABAM2 and BABAM1/NBA1. In the BRCA1-A complex, interacts directly with ABRAXAS1 and BABAM2. Component of the BRISC complex, at least composed of ABRAXAS2, BRCC3/BRCC36, BABAM2 and BABAM1/NBA1. Identified in a complex with SHMT2 and the other subunits of the BRISC complex.

It localises to the cytoplasm. It is found in the nucleus. Functionally, component of the BRCA1-A complex, a complex that specifically recognizes 'Lys-63'-linked ubiquitinated histones H2A and H2AX at DNA lesions sites, leading to target the BRCA1-BARD1 heterodimer to sites of DNA damage at double-strand breaks (DSBs). The BRCA1-A complex also possesses deubiquitinase activity that specifically removes 'Lys-63'-linked ubiquitin on histones H2A and H2AX. In the BRCA1-A complex, it is required for the complex integrity and its localization at DSBs. Component of the BRISC complex, a multiprotein complex that specifically cleaves 'Lys-63'-linked ubiquitin in various substrates. In these 2 complexes, it is probably required to maintain the stability of BABAM2 and help the 'Lys-63'-linked deubiquitinase activity mediated by BRCC3/BRCC36 component. The BRISC complex is required for normal mitotic spindle assembly and microtubule attachment to kinetochores via its role in deubiquitinating NUMA1. Plays a role in interferon signaling via its role in the deubiquitination of the interferon receptor IFNAR1; deubiquitination increases IFNAR1 activity by enhancing its stability and cell surface expression. Down-regulates the response to bacterial lipopolysaccharide (LPS) via its role in IFNAR1 deubiquitination. The protein is BRISC and BRCA1-A complex member 1 (BABAM1) of Bos taurus (Bovine).